A 311-amino-acid chain; its full sequence is Probable inactive peptidyl-prolyl cis-trans isomerase-like 6 (311 aa).

A PPIase cyclophilin-type domain is found at 145–308; the sequence is FLDICIDSSP…HMCRITDSGD (164 aa).

The protein belongs to the cyclophilin-type PPIase family.

Functionally, probable inactive PPIase with no peptidyl-prolyl cis-trans isomerase activity. In Homo sapiens (Human), this protein is Probable inactive peptidyl-prolyl cis-trans isomerase-like 6.